The sequence spans 389 residues: Chalcone synthase 1 (389 aa).

Cys164 is an active-site residue.

Belongs to the thiolase-like superfamily. Chalcone/stilbene synthases family.

It catalyses the reaction (E)-4-coumaroyl-CoA + 3 malonyl-CoA + 3 H(+) = 2',4,4',6'-tetrahydroxychalcone + 3 CO2 + 4 CoA. It functions in the pathway secondary metabolite biosynthesis; flavonoid biosynthesis. In terms of biological role, the primary product of this enzyme is 4,2',4',6'-tetrahydroxychalcone (also termed naringenin-chalcone or chalcone) which can under specific conditions spontaneously isomerize into naringenin. The polypeptide is Chalcone synthase 1 (CHS1) (Daucus carota (Wild carrot)).